Consider the following 422-residue polypeptide: Phosphoribosylamine--glycine ligase (422 aa).

In terms of domain architecture, ATP-grasp spans 107–312; it reads KEVMAAAGVR…LGQLLYAAGT (206 aa). 138–193 contributes to the ATP binding site; that stretch reads PPVGDLSWVVKDDRLAAGKGVVVTSDRDVARTHAAGLLEAGHPVLLESYLDGPEVS. Mg(2+) is bound by residues E282 and N284.

This sequence belongs to the GARS family. Requires Mg(2+) as cofactor. The cofactor is Mn(2+).

It catalyses the reaction 5-phospho-beta-D-ribosylamine + glycine + ATP = N(1)-(5-phospho-beta-D-ribosyl)glycinamide + ADP + phosphate + H(+). Its pathway is purine metabolism; IMP biosynthesis via de novo pathway; N(1)-(5-phospho-D-ribosyl)glycinamide from 5-phospho-alpha-D-ribose 1-diphosphate: step 2/2. The chain is Phosphoribosylamine--glycine ligase from Mycobacterium leprae (strain TN).